The sequence spans 207 residues: Recombination protein RecR (207 aa).

Residues 60–75 (CRHCHNISDSDVCTIC) form a C4-type zinc finger. Positions 83–178 (STLCVVENIR…RVSVIARGIA (96 aa)) constitute a Toprim domain.

The protein belongs to the RecR family.

May play a role in DNA repair. It seems to be involved in an RecBC-independent recombinational process of DNA repair. It may act with RecF and RecO. The protein is Recombination protein RecR of Porphyromonas gingivalis (strain ATCC BAA-308 / W83).